The following is a 118-amino-acid chain: Thioredoxin AMT13 (118 aa).

A Thioredoxin domain is found at Met-1–Gly-110. Cys-36 and Cys-39 are disulfide-bonded.

It belongs to the thioredoxin family.

The protein operates within mycotoxin biosynthesis. Its function is as follows. Thioredoxin; part of the gene clusters that mediate the biosynthesis of AM-toxins, host-selective toxins (HSTs) causing Alternaria blotch on apple, a worldwide distributed disease. AM-toxins are cyclic depsipeptides containing the 3 residues 2-hydroxy-isovaleric acid (2-HIV), dehydroalanine, L-alanine which are common for all 3 AM-toxins I to III. The fourth precursor is L-alpha-amino-methoxyphenyl-valeric acid (L-Amv) for AM-toxin I, L-alpha-amino-phenyl-valeric acid (L-Apv) for AM-toxin II, and L-alpha-amino-hydroxyphenyl-valeric acid (L-Ahv) for AM-toxin III. AM-toxins have two target sites for affecting susceptible apple cells; they cause invagination of the plasma membrane and electrolyte loss and chloroplast disorganization. The non-ribosomal peptide synthetase AMT1 contains 4 catalytic modules and is responsible for activation of each residue in AM-toxin. The aldo-keto reductase AMT2 catalyzes the conversion of 2-keto-isovaleric acid (2-KIV) to 2-hydroxy-isovaleric acid (2-HIV), one of the precursor residues incorporated by AMT1 during AM-toxin biosynthesis, by reduction of its ketone to an alcohol. The cytochrome P450 monooxygenase AMT3 and the thioesterase AMT4 are also important for AM-toxin production, but their exact function within the AM-toxin biosynthesis are not known yet. Up to 21 proteins (including AMT1 to AMT4) are predicted to be involved in AM-toxin biosynthesis since their expression ishighly up-regulated in AM-toxin-producing cultures. This is Thioredoxin AMT13 from Alternaria alternata (Alternaria rot fungus).